The primary structure comprises 340 residues: Probable dual-specificity RNA methyltransferase RlmN (340 aa).

Glu90 functions as the Proton acceptor in the catalytic mechanism. In terms of domain architecture, Radical SAM core spans Gln97–Asn325. A disulfide bond links Cys104 and Cys331. [4Fe-4S] cluster contacts are provided by Cys111, Cys115, and Cys118. Residues Gly157–Glu158, Ser189, Ser212–Thr214, and Asn288 contribute to the S-adenosyl-L-methionine site. Cys331 (S-methylcysteine intermediate) is an active-site residue.

It belongs to the radical SAM superfamily. RlmN family. The cofactor is [4Fe-4S] cluster.

It localises to the cytoplasm. The catalysed reaction is adenosine(2503) in 23S rRNA + 2 reduced [2Fe-2S]-[ferredoxin] + 2 S-adenosyl-L-methionine = 2-methyladenosine(2503) in 23S rRNA + 5'-deoxyadenosine + L-methionine + 2 oxidized [2Fe-2S]-[ferredoxin] + S-adenosyl-L-homocysteine. The enzyme catalyses adenosine(37) in tRNA + 2 reduced [2Fe-2S]-[ferredoxin] + 2 S-adenosyl-L-methionine = 2-methyladenosine(37) in tRNA + 5'-deoxyadenosine + L-methionine + 2 oxidized [2Fe-2S]-[ferredoxin] + S-adenosyl-L-homocysteine. Its function is as follows. Specifically methylates position 2 of adenine 2503 in 23S rRNA and position 2 of adenine 37 in tRNAs. This is Probable dual-specificity RNA methyltransferase RlmN from Treponema pallidum (strain Nichols).